The following is a 262-amino-acid chain: Aminoglycoside (3'') (9) adenylyltransferase (262 aa).

Positions 1–157 (MTLSIPPSIQ…ERAERLFTPA (157 aa)) are adenylyltransferase domain. ATP is bound by residues S36, S46, and D47. D47, D49, and E87 together coordinate Mg(2+). The active-site Proton acceptor is the E87. Residue D130 participates in ATP binding. The tract at residues 158-262 (PAAQLLKALR…AKAHIPTQFT (105 aa)) is helical domain. Residues 173–178 (WQSTAD) and H185 each bind streptomycin. Residues K205 and Y231 each coordinate ATP.

As to quaternary structure, monomer.

It carries out the reaction streptomycin + ATP = 3''-O-adenylylstreptomycin + diphosphate. It catalyses the reaction spectinomycin + ATP = 9-O-adenylylspectinomycin + diphosphate. Its function is as follows. Mediates bacterial resistance to the antibiotics streptomycin and spectinomycin, does not confer resistance to kanamycin. Binds ATP first, then antibiotic. The protein is Aminoglycoside (3'') (9) adenylyltransferase (aadA) of Salmonella typhimurium (strain LT2 / SGSC1412 / ATCC 700720).